The sequence spans 626 residues: Extracellular metalloproteinase 1 (626 aa).

The signal sequence occupies residues 1 to 17 (MLSSLLAGAGLVALAAS). A propeptide spanning residues 18 to 241 (HPTSHGNALT…IHGVVDYSAD (224 aa)) is cleaved from the precursor. The N-linked (GlcNAc...) asparagine glycan is linked to Asn315. His425 is a binding site for Zn(2+). The active site involves Glu426. His429 provides a ligand contact to Zn(2+). Residues 606–626 (GSGARYSSTARTGSTALPSGC) are disordered. The segment covering 610-626 (RYSSTARTGSTALPSGC) has biased composition (polar residues).

Belongs to the peptidase M36 family. It depends on Zn(2+) as a cofactor.

It localises to the secreted. Secreted metalloproteinase that allows assimilation of proteinaceous substrates. In Phaeosphaeria nodorum (strain SN15 / ATCC MYA-4574 / FGSC 10173) (Glume blotch fungus), this protein is Extracellular metalloproteinase 1 (MEP1).